We begin with the raw amino-acid sequence, 389 residues long: E3 ubiquitin-protein ligase E3D (389 aa).

Position 2 is an N-acetylalanine (A2). A BRAT1-like motif motif is present at residues 129–159 (PLPSENWGALVGEWCCHPDPFANKPLHPQEN). C144 lines the Zn(2+) pocket. The interaction with UBE2C stretch occupies residues 235-257 (QSSERSFPIIPRPRFVQSVIAQC). The segment at 353–389 (LPSATCLELLLILSKSNANLPSSLRHMNSFQVAFLKI) is HECT-like.

In terms of assembly, interacts with UBE2C/UbcH10 (E2 ubiquitin-conjugating enzyme). In vitro, interacts with cyclin-B. Ubiquitinated by UBCH10 (E2 ubiquitin-conjugating enzyme).

It localises to the cytoplasm. It carries out the reaction S-ubiquitinyl-[E2 ubiquitin-conjugating enzyme]-L-cysteine + [acceptor protein]-L-lysine = [E2 ubiquitin-conjugating enzyme]-L-cysteine + N(6)-ubiquitinyl-[acceptor protein]-L-lysine.. The protein operates within protein modification; protein ubiquitination. Functionally, E3 ubiquitin-protein ligase which accepts ubiquitin from specific E2 ubiquitin-conjugating enzymes, and transfers it to substrates, generally promoting their degradation by the proteasome. Independently of its E3 ubiquitin-protein ligase activity, acts as an inhibitor of CPSF3 endonuclease activity by blocking CPSF3 active site. This chain is E3 ubiquitin-protein ligase E3D (UBE3D), found in Pongo abelii (Sumatran orangutan).